A 481-amino-acid polypeptide reads, in one-letter code: Methylenetetrahydrofolate--tRNA-(uracil-5-)-methyltransferase TrmFO (481 aa).

13–18 (GGGLAG) is an FAD binding site.

It belongs to the MnmG family. TrmFO subfamily. The cofactor is FAD.

It localises to the cytoplasm. The catalysed reaction is uridine(54) in tRNA + (6R)-5,10-methylene-5,6,7,8-tetrahydrofolate + NADH + H(+) = 5-methyluridine(54) in tRNA + (6S)-5,6,7,8-tetrahydrofolate + NAD(+). It catalyses the reaction uridine(54) in tRNA + (6R)-5,10-methylene-5,6,7,8-tetrahydrofolate + NADPH + H(+) = 5-methyluridine(54) in tRNA + (6S)-5,6,7,8-tetrahydrofolate + NADP(+). In terms of biological role, catalyzes the folate-dependent formation of 5-methyl-uridine at position 54 (M-5-U54) in all tRNAs. This chain is Methylenetetrahydrofolate--tRNA-(uracil-5-)-methyltransferase TrmFO, found in Agrobacterium fabrum (strain C58 / ATCC 33970) (Agrobacterium tumefaciens (strain C58)).